Here is a 373-residue protein sequence, read N- to C-terminus: Decapping nuclease RAI1 (373 aa).

Glu136 contributes to the a divalent metal cation binding site. Positions 168 and 185 each coordinate substrate. A divalent metal cation contacts are provided by Asp187, Glu205, and Leu206. Residues Lys207 and Gln231 each contribute to the substrate site. The interval 340–373 (KDKPPGFEPSDAADAEPSMAEEPVPETASASGAY) is disordered.

It belongs to the DXO/Dom3Z family. In terms of assembly, interacts with RAT1; the interaction is direct, stabilizes RAT1 protein structure and stimulates its exoribonuclease activity. The interaction also stimulates RAI1 pyrophosphohydrolase activity, probably by recruiting it to mRNA substrates. A divalent metal cation serves as cofactor.

The protein localises to the nucleus. It catalyses the reaction a 5'-end NAD(+)-phospho-ribonucleoside in mRNA + H2O = a 5'-end phospho-ribonucleoside in mRNA + NAD(+) + H(+). The catalysed reaction is a 5'-end (N(7)-methyl 5'-triphosphoguanosine)-ribonucleoside-ribonucleotide in mRNA + H2O = a (N(7)-methyl 5'-triphosphoguanosine)-nucleoside + a 5'-end phospho-ribonucleoside in mRNA + H(+). The enzyme catalyses a 5'-end triphospho-ribonucleoside in mRNA + H2O = a 5'-end phospho-ribonucleoside in mRNA + diphosphate + H(+). Its function is as follows. Decapping enzyme for NAD-capped RNAs: specifically hydrolyzes the nicotinamide adenine dinucleotide (NAD) cap from a subset of RNAs by removing the entire NAD moiety from the 5'-end of an NAD-capped RNA. The NAD-cap is present at the 5'-end of some RNAs and snoRNAs. In contrast to the canonical 5'-end N7 methylguanosine (m7G) cap, the NAD cap promotes mRNA decay. Also acts as a non-canonical decapping enzyme that removes the entire cap structure of m7G capped or incompletely capped RNAs. Has decapping activity toward incomplete 5'-end m7G cap mRNAs such as unmethylated 5'-end-capped RNA (cap0), while it has no activity toward 2'-O-ribose methylated m7G cap (cap1). Also possesses RNA 5'-pyrophosphohydrolase activity by hydrolyzing the 5'-end triphosphate to release pyrophosphates. Stimulates exoribonuclease activity of Rat1, allowing it to degrade RNAs with stable secondary structure more effectively. In Chaetomium globosum (strain ATCC 6205 / CBS 148.51 / DSM 1962 / NBRC 6347 / NRRL 1970) (Soil fungus), this protein is Decapping nuclease RAI1 (RAI1).